Here is a 215-residue protein sequence, read N- to C-terminus: Cytochrome b6 (215 aa).

A helical transmembrane segment spans residues 32-52 (IFYCLGGITLTCFLIQFATGF). Heme c is bound at residue C35. Heme b is bound by residues H86 and H100. The next 3 membrane-spanning stretches (helical) occupy residues 90–110 (ASMM…TGGF), 116–136 (LTWV…VTGY), and 186–206 (LHTF…FLMI). Residues H187 and H202 each contribute to the heme b site.

This sequence belongs to the cytochrome b family. PetB subfamily. In terms of assembly, the 4 large subunits of the cytochrome b6-f complex are cytochrome b6, subunit IV (17 kDa polypeptide, PetD), cytochrome f and the Rieske protein, while the 4 small subunits are PetG, PetL, PetM and PetN. The complex functions as a dimer. Requires heme b as cofactor. Heme c is required as a cofactor.

The protein localises to the cellular thylakoid membrane. In terms of biological role, component of the cytochrome b6-f complex, which mediates electron transfer between photosystem II (PSII) and photosystem I (PSI), cyclic electron flow around PSI, and state transitions. The protein is Cytochrome b6 of Synechococcus elongatus (strain ATCC 33912 / PCC 7942 / FACHB-805) (Anacystis nidulans R2).